Here is a 39-residue protein sequence, read N- to C-terminus: Cytochrome b6-f complex subunit 5 (39 aa).

A helical transmembrane segment spans residues 5-25; the sequence is LLCGIVLGLVPITLLGLFVAA.

This sequence belongs to the PetG family. The 4 large subunits of the cytochrome b6-f complex are cytochrome b6, subunit IV (17 kDa polypeptide, PetD), cytochrome f and the Rieske protein, while the 4 small subunits are PetG, PetL, PetM and PetN. The complex functions as a dimer.

The protein resides in the cellular thylakoid membrane. Functionally, component of the cytochrome b6-f complex, which mediates electron transfer between photosystem II (PSII) and photosystem I (PSI), cyclic electron flow around PSI, and state transitions. PetG is required for either the stability or assembly of the cytochrome b6-f complex. The sequence is that of Cytochrome b6-f complex subunit 5 from Prochlorococcus marinus (strain SARG / CCMP1375 / SS120).